Reading from the N-terminus, the 395-residue chain is Putative transport protein sll0063 (395 aa).

Helical transmembrane passes span 24-44 (LNAI…VLNA), 50-70 (IFGY…IAFL), 91-111 (FVFL…IPLA), 180-200 (VFTV…FYLL), 245-265 (ALGL…LFGL), 269-289 (VMAL…FLVA), 295-315 (MALQ…NGIA), and 328-348 (FWVL…GVIV).

This sequence belongs to the autoinducer-2 exporter (AI-2E) (TC 2.A.86) family.

The protein resides in the cell membrane. The chain is Putative transport protein sll0063 from Synechocystis sp. (strain ATCC 27184 / PCC 6803 / Kazusa).